A 187-amino-acid polypeptide reads, in one-letter code: Imidazoleglycerol-phosphate dehydratase (187 aa).

Belongs to the imidazoleglycerol-phosphate dehydratase family.

The protein resides in the cytoplasm. The enzyme catalyses D-erythro-1-(imidazol-4-yl)glycerol 3-phosphate = 3-(imidazol-4-yl)-2-oxopropyl phosphate + H2O. The protein operates within amino-acid biosynthesis; L-histidine biosynthesis; L-histidine from 5-phospho-alpha-D-ribose 1-diphosphate: step 6/9. The polypeptide is Imidazoleglycerol-phosphate dehydratase (Pyrobaculum calidifontis (strain DSM 21063 / JCM 11548 / VA1)).